The primary structure comprises 461 residues: TWiK family of potassium channels protein 18 (461 aa).

The Cytoplasmic segment spans residues 1–21 (MAIVAQGVSTILTTFQKTFKG). A helical membrane pass occupies residues 22-42 (LLPLIILVAYTLLGAWIFWMI). N-linked (GlcNAc...) asparagine glycosylation is present at Asn88. Residues 116–136 (FLGSIFYCMTVYTTIGYGNIV) constitute an intramembrane region (pore-forming). A helical membrane pass occupies residues 144-164 (FATILYAFIGIPLTVLSLYCL). At 165 to 224 (GSLFAKGCKMLWRFFLKSTRVVSKDLSNKISEAADNIEEGTTAITPSAEKTENNDDDLLS) the chain is on the cytoplasmic side. Residues 225-245 (FPISGLLLITVIWVIFCAVLF) traverse the membrane as a helical segment. Positions 253–273 (FGTSLYFTLISFTTIGFGDIL) form an intramembrane region, pore-forming. Residues 281-301 (PIVGVLLLIGLSLVSTVMTLI) traverse the membrane as a helical segment. The Cytoplasmic segment spans residues 302 to 461 (QQQIEALASG…GNEDYLEHDI (160 aa)). A disordered region spans residues 328-347 (REDGEVDEHVDPEEDPENNK).

It belongs to the two pore domain potassium channel (TC 1.A.1.8) family. In terms of tissue distribution, expressed in body wall muscle.

It localises to the membrane. Its function is as follows. Outwardly rectifying potassium channel protein; activity is sharply augmented by increase in temperature. The chain is TWiK family of potassium channels protein 18 (twk-18) from Caenorhabditis elegans.